Consider the following 453-residue polypeptide: Na(+)/H(+) antiporter NhaA 2 (453 aa).

Transmembrane regions (helical) follow at residues 32-52, 71-91, 109-129, 140-160, 169-189, 193-213, 232-252, 284-304, 310-330, 356-376, and 382-402; these read GALLLAGAVIALIWANSPGAA, LSLAAWAKDGLLAVFFFVAGL, AVPIAAAVGGVLAPAAVYVLI, GWAIPAATDIAFALAVLAVIG, VFLLTLAVVDDLIAIMIIAVF, NLSVTPLLATALPLVAFAILL, ALVHASGVHATVAGVLLALVV, AVPVFALMSAGVAIGGLGGLV, PVAIGVIAGLVIGKPLGVIAV, MLAGIGFTVSLLIGELSFAAG, and HVKIAIVTGSLIAAVLAAVIL. The interval 409–453 is disordered; that stretch reads GSRGNDATTRDPDQTRVGTATQRTTPDHPTPAATDANQPARSPAP.

Belongs to the NhaA Na(+)/H(+) (TC 2.A.33) antiporter family.

The protein resides in the cell membrane. It carries out the reaction Na(+)(in) + 2 H(+)(out) = Na(+)(out) + 2 H(+)(in). Functionally, na(+)/H(+) antiporter that extrudes sodium in exchange for external protons. This chain is Na(+)/H(+) antiporter NhaA 2, found in Salinispora tropica (strain ATCC BAA-916 / DSM 44818 / JCM 13857 / NBRC 105044 / CNB-440).